Consider the following 399-residue polypeptide: Protein DDI1 homolog 2 (399 aa).

The Ubiquitin-like domain occupies 1–81 (MLLTVYCVRR…VILRQKENAD (81 aa)). A disordered region spans residues 99 to 134 (IAVPGTSSPRQRQPPGTQQSHSSPGEITSSPQGLDN). Residues 103 to 131 (GTSSPRQRQPPGTQQSHSSPGEITSSPQG) are compositionally biased toward polar residues. Thr104 is modified (phosphothreonine). 5 positions are modified to phosphoserine: Ser106, Ser121, Ser128, Ser150, and Ser194. Residue Asp252 is part of the active site. A Ubiquitin-binding motif is present at residues 376–395 (EEIADQELAEALQKSAEDAE).

Belongs to the DDI1 family. Homodimer. Interacts with MCM6; PCNA; PSMD4; PSMD8; RPA2 and RPN2. Interacts with RTF2.

It localises to the cytoplasm. Its subcellular location is the cytosol. The protein localises to the chromosome. Its function is as follows. Aspartic protease that mediates the cleavage of NFE2L1/NRF1 at 'Leu-104', thereby promoting release of NFE2L1/NRF1 from the endoplasmic reticulum membrane. Ubiquitination of NFE2L1/NRF1 is a prerequisite for cleavage, suggesting that DDI2 specifically recognizes and binds ubiquitinated NFE2L1/NRF1. Seems to act as a proteasomal shuttle which links the proteasome and replication fork proteins like RTF2. Required, with DDI1, for cellular survival following replication stress. Together or redudantly with DDI1, removes RTF2 from stalled forks to allow cell cycle progression after replication stress and maintains genome integrity. This is Protein DDI1 homolog 2 from Homo sapiens (Human).